The following is a 185-amino-acid chain: HTH-type transcriptional regulator SACOL2593 (185 aa).

The HTH tetR-type domain occupies 6 to 66 (KENRQRIEEI…YVIQRDLDIF (61 aa)). Positions 29–48 (SMNRIAKELGIGMGTLYRHF) form a DNA-binding region, H-T-H motif.

This chain is HTH-type transcriptional regulator SACOL2593, found in Staphylococcus aureus (strain COL).